Reading from the N-terminus, the 394-residue chain is S-adenosylmethionine synthase 3 (394 aa).

Glu-11 contributes to the Mg(2+) binding site. ATP is bound at residue His-17. Glu-45 provides a ligand contact to K(+). Glu-58 and Gln-101 together coordinate L-methionine. ATP is bound by residues 169–171 (DGK), 237–240 (SGRF), Asp-248, 254–255 (RK), Ala-271, Lys-275, and Lys-279. Residue Asp-248 participates in L-methionine binding. Lys-279 provides a ligand contact to L-methionine.

Belongs to the AdoMet synthase family. In terms of assembly, homotetramer. It depends on Mn(2+) as a cofactor. Mg(2+) is required as a cofactor. Requires Co(2+) as cofactor. K(+) serves as cofactor.

It is found in the cytoplasm. It catalyses the reaction L-methionine + ATP + H2O = S-adenosyl-L-methionine + phosphate + diphosphate. Its pathway is amino-acid biosynthesis; S-adenosyl-L-methionine biosynthesis; S-adenosyl-L-methionine from L-methionine: step 1/1. Functionally, catalyzes the formation of S-adenosylmethionine from methionine and ATP. The reaction comprises two steps that are both catalyzed by the same enzyme: formation of S-adenosylmethionine (AdoMet) and triphosphate, and subsequent hydrolysis of the triphosphate. The chain is S-adenosylmethionine synthase 3 (SAM3) from Hordeum vulgare (Barley).